Consider the following 255-residue polypeptide: Ribonuclease HII (255 aa).

Residues 72-255 enclose the RNase H type-2 domain; it reads RLIAGVDEAG…KTFAPVQSYC (184 aa). Residues aspartate 78, glutamate 79, and aspartate 170 each contribute to the a divalent metal cation site.

The protein belongs to the RNase HII family. It depends on Mn(2+) as a cofactor. Requires Mg(2+) as cofactor.

The protein resides in the cytoplasm. It carries out the reaction Endonucleolytic cleavage to 5'-phosphomonoester.. Functionally, endonuclease that specifically degrades the RNA of RNA-DNA hybrids. The protein is Ribonuclease HII of Bacillus velezensis (strain DSM 23117 / BGSC 10A6 / LMG 26770 / FZB42) (Bacillus amyloliquefaciens subsp. plantarum).